Consider the following 255-residue polypeptide: Aliphatic sulfonates import ATP-binding protein SsuB (255 aa).

Positions 7 to 231 (IKEKAFVQEG…PRNRTTPDFQ (225 aa)) constitute an ABC transporter domain. 39 to 46 (GPSGCGKS) provides a ligand contact to ATP.

Belongs to the ABC transporter superfamily. Aliphatic sulfonates importer (TC 3.A.1.17.2) family. In terms of assembly, the complex is composed of two ATP-binding proteins (SsuB), two transmembrane proteins (SsuC) and a solute-binding protein (SsuA).

The protein resides in the cell membrane. The enzyme catalyses ATP + H2O + aliphatic sulfonate-[sulfonate-binding protein]Side 1 = ADP + phosphate + aliphatic sulfonateSide 2 + [sulfonate-binding protein]Side 1.. Part of the ABC transporter complex SsuABC involved in aliphatic sulfonates import. Responsible for energy coupling to the transport system. Is also involved in taurine transport. The protein is Aliphatic sulfonates import ATP-binding protein SsuB of Bacillus subtilis (strain 168).